The sequence spans 316 residues: Acetyl-coenzyme A carboxylase carboxyl transferase subunit beta (316 aa).

The CoA carboxyltransferase N-terminal domain occupies L39–M308. C43, C46, C62, and C65 together coordinate Zn(2+). The C4-type zinc finger occupies C43–C65.

The protein belongs to the AccD/PCCB family. As to quaternary structure, acetyl-CoA carboxylase is a heterohexamer composed of biotin carboxyl carrier protein (AccB), biotin carboxylase (AccC) and two subunits each of ACCase subunit alpha (AccA) and ACCase subunit beta (AccD). The cofactor is Zn(2+).

The protein localises to the cytoplasm. The enzyme catalyses N(6)-carboxybiotinyl-L-lysyl-[protein] + acetyl-CoA = N(6)-biotinyl-L-lysyl-[protein] + malonyl-CoA. It participates in lipid metabolism; malonyl-CoA biosynthesis; malonyl-CoA from acetyl-CoA: step 1/1. Functionally, component of the acetyl coenzyme A carboxylase (ACC) complex. Biotin carboxylase (BC) catalyzes the carboxylation of biotin on its carrier protein (BCCP) and then the CO(2) group is transferred by the transcarboxylase to acetyl-CoA to form malonyl-CoA. The sequence is that of Acetyl-coenzyme A carboxylase carboxyl transferase subunit beta from Trichormus variabilis (strain ATCC 29413 / PCC 7937) (Anabaena variabilis).